A 276-amino-acid polypeptide reads, in one-letter code: Undecaprenyl-diphosphatase (276 aa).

Transmembrane regions (helical) follow at residues 48 to 68 (AANS…AIVF), 92 to 112 (LSIA…FLFE), 119 to 139 (LFSV…MLFA), 155 to 175 (ISYK…WPGF), 196 to 216 (ADFT…LSLV), 225 to 245 (DLMP…LFVV), and 255 to 275 (IKLV…LLIM).

The protein belongs to the UppP family.

It localises to the cell membrane. It carries out the reaction di-trans,octa-cis-undecaprenyl diphosphate + H2O = di-trans,octa-cis-undecaprenyl phosphate + phosphate + H(+). Catalyzes the dephosphorylation of undecaprenyl diphosphate (UPP). Confers resistance to bacitracin. This chain is Undecaprenyl-diphosphatase, found in Bacillus subtilis (strain 168).